The sequence spans 216 residues: RNA pyrophosphohydrolase (216 aa).

The Nudix hydrolase domain maps to 6 to 149 (GFRPNVGIIL…KRDVYQLALT (144 aa)). Residues 38–59 (GGIKYGETPMQAMYRELHEETG) carry the Nudix box motif. A disordered region spans residues 159–191 (AQRTDKSRGPRAPRYPRVANGHAASETPAAIDT).

It belongs to the Nudix hydrolase family. RppH subfamily. Requires a divalent metal cation as cofactor.

Functionally, accelerates the degradation of transcripts by removing pyrophosphate from the 5'-end of triphosphorylated RNA, leading to a more labile monophosphorylated state that can stimulate subsequent ribonuclease cleavage. This Burkholderia pseudomallei (strain 668) protein is RNA pyrophosphohydrolase.